We begin with the raw amino-acid sequence, 466 residues long: GATA-binding factor 2 (466 aa).

Low complexity-rich tracts occupy residues Gly-139–Ser-155 and Pro-174–Ala-188. The disordered stretch occupies residues Gly-139–Asp-196. 2 GATA-type zinc fingers span residues Cys-281–Cys-305 and Cys-335–Cys-359. Residues Gly-436–Gly-466 are disordered.

As to expression, expressed in all developmental stages of erythroid cells but is additionally found in a limited subset of other tissues.

The protein localises to the nucleus. In terms of biological role, transcriptional activator which probably serves as a general switch factor for cell-specific development. It binds to DNA sites with the consensus sequence 5'-[AT]GATA[AG]-3' within regulatory regions of genes. This Gallus gallus (Chicken) protein is GATA-binding factor 2 (GATA2).